The sequence spans 414 residues: 2-acylphloroglucinol 4-prenyltransferase (414 aa).

Residues 1-86 constitute a chloroplast transit peptide; that stretch reads MELSSVSSFS…LKPLSIFSCK (86 aa). Helical transmembrane passes span 153 to 173, 201 to 221, 229 to 249, 256 to 276, 281 to 301, 336 to 356, 359 to 379, and 394 to 414; these read FSWPLIFRALLGMLAILGSCF, ISVESAWLLTLSPAIIGFILI, LLTSLYCLAILSGTIYSVPPF, ITAFLCILMIHAGLNFSVYYA, LGLAFVWSPSFSFITAFITFM, LLGTGLLLLNYVAAISTAIIW, AFKSNIMLLSHAILAFSLFFQ, and KSFYEFIWILFSAEYVVYLFI.

Belongs to the UbiA prenyltransferase family. Component an active demethylxanthohumol (DMX) biosynthetic metabolon in glandular trichomes (lupulin glands) that encompasses a chalcone synthase (CHS) and a membrane-bound prenyltransferase. Interacts with PT2, forming a functional metabolon. Interacts with CHIL2; this interaction promotes catalytic activity. Mg(2+) serves as cofactor. In terms of tissue distribution, expressed in trichomes.

Its subcellular location is the plastid. The protein localises to the chloroplast membrane. The enzyme catalyses 2',4,4',6'-tetrahydroxychalcone + dimethylallyl diphosphate = desmethylxanthohumol + diphosphate. The catalysed reaction is a 2-acylphloroglucinol + dimethylallyl diphosphate = a 2-acyl-4-prenylphloroglucinol + diphosphate. The protein operates within secondary metabolite biosynthesis. Its activity is regulated as follows. Stimulated by CHIL2 but inhibited by CHIL1. In terms of biological role, involved in the biosynthesis of prenylated phenolics natural products which contribute to the bitter taste of beer and display broad biological activities. Catalyzes the first prenylation step in the beta-bitter acid pathway. Uses dimethylallyl diphosphate (DMAPP) as the prenyl donor. The chain is 2-acylphloroglucinol 4-prenyltransferase from Humulus lupulus (European hop).